We begin with the raw amino-acid sequence, 683 residues long: Synaptic vesicle glycoprotein 2B (683 aa).

A compositionally biased stretch (basic and acidic residues) spans 1–10; that stretch reads MDDYRYRDNY. The segment at 1 to 72 is disordered; that stretch reads MDDYRYRDNY…QTKMAPSRAD (72 aa). The Cytoplasmic segment spans residues 1 to 110; it reads MDDYRYRDNY…ECGHGRFQWT (110 aa). At Ser-33 the chain carries Phosphoserine. The residue at position 36 (Thr-36) is a Phosphothreonine. Residues 111–131 form a helical membrane-spanning segment; that stretch reads LFFVLVLALMADGVEVFVVSF. At 132–148 the chain is on the extracellular side; it reads ALPSAEKDMCLSSSKKG. Residues 149-169 traverse the membrane as a helical segment; that stretch reads MLGLIVYLGMMAGAFILGGLA. Over 170–182 the chain is Cytoplasmic; that stretch reads DKLGRKKVLSMSL. The helical transmembrane segment at 183-203 threads the bilayer; sequence AINASFASLSSFVQGYGAFLF. Residues 204-205 are Extracellular-facing; that stretch reads CR. Residues 206-226 traverse the membrane as a helical segment; it reads LISGIGIGGSLPIVFAYFSEF. Residues 227–237 lie on the Cytoplasmic side of the membrane; it reads LSREKRGEHLS. The helical transmembrane segment at 238–258 threads the bilayer; that stretch reads WLGIFWMTGGIYASAMAWSII. Over 259–277 the chain is Extracellular; sequence PHYGWGFSMGTNYHFHSWR. Residues 278 to 298 traverse the membrane as a helical segment; it reads VFVIVCALPATVSMVALKFMP. Over 299 to 390 the chain is Cytoplasmic; that stretch reads ESPRFLLEMG…CVMGPYRMNT (92 aa). The helical transmembrane segment at 391-411 threads the bilayer; sequence LILAVVWFTMALSYYGLTVWF. Topologically, residues 412-535 are extracellular; sequence PDMIRYFQDE…CHMDFEEDND (124 aa). A Phosphotyrosine modification is found at Tyr-423. N-linked (GlcNAc...) asparagine glycosylation is found at Asn-441, Asn-491, and Asn-516. Residues 536–556 traverse the membrane as a helical segment; that stretch reads FLIYLVSFLGSLSVLPGNIIS. Over 557-565 the chain is Cytoplasmic; the sequence is ALLMDRIGR. The helical transmembrane segment at 566 to 586 threads the bilayer; the sequence is LKMIGGSMLISAVCCFFLFFG. Residues 587–592 are Extracellular-facing; sequence NSESAM. The helical transmembrane segment at 593–613 threads the bilayer; sequence IGWQCLFCGTSIAAWNALDVI. Topologically, residues 614-626 are cytoplasmic; the sequence is TVELYPTNQRATA. A helical transmembrane segment spans residues 627–649; the sequence is FGILNGLCKLGAILGNTIFASFV. Over 650 to 653 the chain is Extracellular; sequence GITK. The chain crosses the membrane as a helical span at residues 654–672; the sequence is VVPILLAAASLVGGGLVAL. The Cytoplasmic portion of the chain corresponds to 673–683; that stretch reads RLPETREQVLM.

It belongs to the major facilitator superfamily. As to quaternary structure, interacts with SYT1 in a calcium-independent manner. Forms a complex with SYT1, syntaxin-1 and SNAP25. (Microbial infection) Interacts with C.botulinum neurotoxin type A1 and type A2 (BoNT/A, botA). Interaction is improved by glycosylation of SV2. In terms of assembly, (Microbial infection) Interacts with C.botulinum neurotoxin type D (BoNT/D, botD). As to quaternary structure, (Microbial infection) Interacts with C.botulinum neurotoxin type E (BoNT/E). Interaction requires glycosylation of SV2 proteins. (Microbial infection) Interacts with C.botulinum neurotoxin type F (BoNT/F). Interaction requires glycosylation of SV2 proteins. Post-translationally, N-glycosylated. The N-terminal cytoplasmic domain is phosphorylated by CK1. Widely expressed throughout the brain. Specifically expressed by pinealocytes in the pineal gland. Also detected in testis (at protein level). Specifically expressed in neural tissues. Expressed in the spinal cord and in all brain regions with a stronger expression in hippocampus and cortex.

The protein localises to the cytoplasmic vesicle. It localises to the secretory vesicle. It is found in the synaptic vesicle membrane. Its subcellular location is the acrosome. Its function is as follows. Probably plays a role in the control of regulated secretion in neural and endocrine cells. In terms of biological role, (Microbial infection) Receptor for C.botulinum neurotoxin type A (BoNT/A, botA); the toxin binds via extracellular loop 4. Restores uptake of BoNT/A in mouse and rat cells that are deleted for SV2 receptor. Glycosylation of SV2B is not essential for receptor activity, but enhances the interaction. Also serves as a receptor for the closely related C.botulinum neurotoxin type A2; glycosylation is not essential but enhances the interaction. (Microbial infection) Possible receptor for C.botulinum neurotoxin type D (BoNT/D, botD); BoNT/D does not bind to extracellular loop 4 as do BoNT/A and BoNT/E. Another group does not find a convincing interaction with SV2. Functionally, (Microbial infection) Receptor for C.botulinum neurotoxin type E (BoNT/E); the toxin probably binds via extracellular loop 4. Restores uptake of BoNT/E in mouse cells that are deleted for SV2 receptor. Glycosylation of SV2B is not essential for receptor activity, but enhances the interaction. Its function is as follows. (Microbial infection) Receptor for C.botulinum neurotoxin type F (BoNT/F); binding requires glycosylation of this protein. This chain is Synaptic vesicle glycoprotein 2B (Sv2b), found in Rattus norvegicus (Rat).